The chain runs to 980 residues: NACHT, LRR and PYD domains-containing protein 7 (980 aa).

Residues 1–93 (MTSPQLEWTL…CKMAKAEMME (93 aa)) enclose the Pyrin domain. The interval 104–123 (ELGDAEEDSELAKPGEKEGW) is disordered. Over residues 113–123 (ELAKPGEKEGW) the composition is skewed to basic and acidic residues. Residues 172–491 (YTVVLHGPAG…LEKEEGEDRD (320 aa)) form the NACHT domain. 178–185 (GPAGVGKT) contacts ATP. LRR repeat units follow at residues 614–638 (CQDL…DFEL), 674–697 (NSNL…ILCD), 760–784 (KCNL…FFYV), 788–810 (NQSL…MLLY), 817–840 (KHFL…DLAA), 845–868 (SKKL…FLCE), 874–897 (DCKL…YLSE), 902–928 (ACSL…ALEN), and 933–957 (LKHL…VKEK).

The protein belongs to the NLRP family. As to quaternary structure, directly interacts with CASP1 and IL1B. Expressed in numerous tissues including uterus and ovary, with low levels in heart and brain. Not detected in skeletal muscle.

Functionally, inhibits CASP1/caspase-1-dependent IL1B secretion. The chain is NACHT, LRR and PYD domains-containing protein 7 (NLRP7) from Homo sapiens (Human).